Reading from the N-terminus, the 69-residue chain is Intrepicalcin (69 aa).

Positions 1-27 (MRQNTMTIIFIVFIVTFASLTIYGAEA) are cleaved as a signal peptide. The propeptide occupies 28 to 36 (SEANFLERR). Intrachain disulfides connect cysteine 39–cysteine 53, cysteine 46–cysteine 57, and cysteine 52–cysteine 68. An essential for stimulation of [3H]ryanodine binding to RYR1 region spans residues 59–60 (RR).

Belongs to the scorpion calcin family. In terms of tissue distribution, expressed by the venom gland.

The protein localises to the secreted. In terms of biological role, this toxin stabilizes ryanodine receptor 1 (RyR1) opening in a long-lasting subconductance state (55% of the full conductance state). Furthermore, it triggers calcium release from sarcoplasmic vesicles (45.3 nM are enough to induce a sharp release, and 50% of the total calcium is released after toxin (100 nM) addition) probably by acting as a cell-penetrating peptide (CPP). In addition, it has been shown to dose-dependently stimulate ryanodine binding to RyR1 (EC(50)=17.4 nM). It also augments the bell-shaped calcium-[3H]ryanodine binding curve that is maximal at about 10 uM calcium concentration. It binds a different site as ryanodine. It acts synergistically with caffeine. In vivo, intracerebroventricular injection into mice induces neurotoxic symptoms, followed by death. This Thorellius intrepidus (Scorpion) protein is Intrepicalcin.